Consider the following 170-residue polypeptide: Large ribosomal subunit protein uL22z (170 aa).

The protein belongs to the universal ribosomal protein uL22 family.

This is Large ribosomal subunit protein uL22z from Hordeum vulgare (Barley).